The primary structure comprises 200 residues: NADH-quinone oxidoreductase subunit C (200 aa).

This sequence belongs to the complex I 30 kDa subunit family. NDH-1 is composed of 14 different subunits. Subunits NuoB, C, D, E, F, and G constitute the peripheral sector of the complex.

The protein resides in the cell inner membrane. It catalyses the reaction a quinone + NADH + 5 H(+)(in) = a quinol + NAD(+) + 4 H(+)(out). Its function is as follows. NDH-1 shuttles electrons from NADH, via FMN and iron-sulfur (Fe-S) centers, to quinones in the respiratory chain. The immediate electron acceptor for the enzyme in this species is believed to be ubiquinone. Couples the redox reaction to proton translocation (for every two electrons transferred, four hydrogen ions are translocated across the cytoplasmic membrane), and thus conserves the redox energy in a proton gradient. This Thiobacillus denitrificans (strain ATCC 25259 / T1) protein is NADH-quinone oxidoreductase subunit C.